Consider the following 376-residue polypeptide: Chaperone protein DnaJ (376 aa).

The J domain maps to 5–72 (DFYEVLGVPK…QKRAAYDQYG (68 aa)). The CR-type zinc finger occupies 136-214 (GKEAQIRIPS…CHGQGRVKKQ (79 aa)). Zn(2+)-binding residues include Cys-149, Cys-152, Cys-166, Cys-169, Cys-188, Cys-191, Cys-202, and Cys-205. CXXCXGXG motif repeat units follow at residues 149 to 156 (CETCHGSG), 166 to 173 (CGTCQGSG), 188 to 195 (CPHCRGTG), and 202 to 209 (CTACHGQG). 2 disordered regions span residues 227–246 (DGMR…GGPP) and 352–376 (SLKK…SFFS). The segment covering 237–246 (GEPGTNGGPP) has biased composition (gly residues). Positions 367-376 (WTDRLKSFFS) are enriched in basic and acidic residues.

The protein belongs to the DnaJ family. Homodimer. Zn(2+) is required as a cofactor.

It localises to the cytoplasm. Functionally, participates actively in the response to hyperosmotic and heat shock by preventing the aggregation of stress-denatured proteins and by disaggregating proteins, also in an autonomous, DnaK-independent fashion. Unfolded proteins bind initially to DnaJ; upon interaction with the DnaJ-bound protein, DnaK hydrolyzes its bound ATP, resulting in the formation of a stable complex. GrpE releases ADP from DnaK; ATP binding to DnaK triggers the release of the substrate protein, thus completing the reaction cycle. Several rounds of ATP-dependent interactions between DnaJ, DnaK and GrpE are required for fully efficient folding. Also involved, together with DnaK and GrpE, in the DNA replication of plasmids through activation of initiation proteins. The protein is Chaperone protein DnaJ of Acidovorax sp. (strain JS42).